The chain runs to 155 residues: Aspartate 1-decarboxylase (155 aa).

The active-site Schiff-base intermediate with substrate; via pyruvic acid is the serine 24. At serine 24 the chain carries Pyruvic acid (Ser). Threonine 56 serves as a coordination point for substrate. The active-site Proton donor is tyrosine 57. 72–74 (GAA) contributes to the substrate binding site.

It belongs to the PanD family. As to quaternary structure, heterooctamer of four alpha and four beta subunits. The cofactor is pyruvate. Is synthesized initially as an inactive proenzyme, which is activated by self-cleavage at a specific serine bond to produce a beta-subunit with a hydroxyl group at its C-terminus and an alpha-subunit with a pyruvoyl group at its N-terminus.

The protein resides in the cytoplasm. It catalyses the reaction L-aspartate + H(+) = beta-alanine + CO2. The protein operates within cofactor biosynthesis; (R)-pantothenate biosynthesis; beta-alanine from L-aspartate: step 1/1. Catalyzes the pyruvoyl-dependent decarboxylation of aspartate to produce beta-alanine. The chain is Aspartate 1-decarboxylase from Methylocella silvestris (strain DSM 15510 / CIP 108128 / LMG 27833 / NCIMB 13906 / BL2).